The following is a 456-amino-acid chain: 5-hydroxytryptamine receptor 3E (456 aa).

The N-terminal stretch at 1–25 (MEGSWFHRKRFSFYLLLGFLLQGRG) is a signal peptide. Residues 26–248 (VTFTINCSGF…FYVAIRRRPS (223 aa)) are Extracellular-facing. Cysteines 162 and 176 form a disulfide. Residue Asn175 is glycosylated (N-linked (GlcNAc...) asparagine). The chain crosses the membrane as a helical span at residues 249 to 269 (LYVINLLVPSGFLVAIDALSF). At 270 to 282 (YLPVKSGNRVPFK) the chain is on the cytoplasmic side. The chain crosses the membrane as a helical span at residues 283 to 303 (ITLLLGYNVFLLMMSDLLPTS). Topologically, residues 304-307 (GTPL) are extracellular. A helical membrane pass occupies residues 308-328 (IGVYFALCLSLMVGSLLETIF). Residues 329 to 433 (ITHLLHVATT…WLQFSHAMDA (105 aa)) are Cytoplasmic-facing. An HA-stretch; determines single-channel conductance in 5-HT3 receptors region spans residues 401–432 (TGGSEWTRAQREHEAQKQHSVELWLQFSHAMD). The chain crosses the membrane as a helical span at residues 434–454 (MLFRLYLLFMASSIITVICLW). Topologically, residues 455–456 (NT) are extracellular.

This sequence belongs to the ligand-gated ion channel (TC 1.A.9) family. 5-hydroxytryptamine receptor (TC 1.A.9.2) subfamily. HTR3E sub-subfamily. In terms of assembly, forms homopentameric as well as heteropentameric serotonin-activated cation-selective channel complexes with HTR3A. The homomeric complex is not functional. Heteropentameric complexes display properties which resemble that of neuronal serotonin-activated channels in vivo. In terms of tissue distribution, expressed in adult colon and intestine.

It is found in the postsynaptic cell membrane. The protein resides in the cell membrane. The enzyme catalyses Na(+)(in) = Na(+)(out). The catalysed reaction is K(+)(in) = K(+)(out). It carries out the reaction Ca(2+)(in) = Ca(2+)(out). Forms serotonin (5-hydroxytryptamine/5-HT3)-activated cation-selective channel complexes, which when activated cause fast, depolarizing responses in neurons. The chain is 5-hydroxytryptamine receptor 3E from Homo sapiens (Human).